Consider the following 185-residue polypeptide: MANAIIEKAKERMTQSHQSLAREFGGIRAGRANASLLDRIHVEYYGVETPLNQIASITIPEARVLLVTPFDKSSLKDIERALNASDLGNTPANDGSVIRLVVPALTEETRRDLAKEVKKVGENAKVAVRNIRRDAMDEAKKQEKAKEITEDELKTLEKDIQKVTDDAVKHIDDMTANKEKELLEV.

It belongs to the RRF family.

It is found in the cytoplasm. Responsible for the release of ribosomes from messenger RNA at the termination of protein biosynthesis. May increase the efficiency of translation by recycling ribosomes from one round of translation to another. This is Ribosome-recycling factor from Streptococcus pneumoniae (strain P1031).